We begin with the raw amino-acid sequence, 160 residues long: 2-C-methyl-D-erythritol 2,4-cyclodiphosphate synthase (160 aa).

Aspartate 9 and histidine 11 together coordinate a divalent metal cation. Residues 9–11 and 35–36 each bind 4-CDP-2-C-methyl-D-erythritol 2-phosphate; these read DVH and HS. An a divalent metal cation-binding site is contributed by histidine 43. 4-CDP-2-C-methyl-D-erythritol 2-phosphate-binding positions include 57–59, 62–66, 101–107, 133–136, phenylalanine 140, and arginine 143; these read DIG, FPDTD, AEAPKMA, and TTSE.

It belongs to the IspF family. Homotrimer. Requires a divalent metal cation as cofactor.

It catalyses the reaction 4-CDP-2-C-methyl-D-erythritol 2-phosphate = 2-C-methyl-D-erythritol 2,4-cyclic diphosphate + CMP. The protein operates within isoprenoid biosynthesis; isopentenyl diphosphate biosynthesis via DXP pathway; isopentenyl diphosphate from 1-deoxy-D-xylulose 5-phosphate: step 4/6. Its function is as follows. Involved in the biosynthesis of isopentenyl diphosphate (IPP) and dimethylallyl diphosphate (DMAPP), two major building blocks of isoprenoid compounds. Catalyzes the conversion of 4-diphosphocytidyl-2-C-methyl-D-erythritol 2-phosphate (CDP-ME2P) to 2-C-methyl-D-erythritol 2,4-cyclodiphosphate (ME-CPP) with a corresponding release of cytidine 5-monophosphate (CMP). This is 2-C-methyl-D-erythritol 2,4-cyclodiphosphate synthase from Methylobacillus flagellatus (strain ATCC 51484 / DSM 6875 / VKM B-1610 / KT).